The following is a 378-amino-acid chain: TelA-like protein SAB1262 (378 aa).

This sequence belongs to the TelA family.

This chain is TelA-like protein SAB1262, found in Staphylococcus aureus (strain bovine RF122 / ET3-1).